The following is a 275-amino-acid chain: MKMMNGEDANDQMIKESFFITHGNPILTVEDTHPLRPFFETWREKIFSKKPKAILIISGHWETVKPTVNAVHINDTIHDFDDYPAAMYQFKYPAPGEPELARKVEEILKKSGFETAETDQKRGLDHGAWVPLMLMYPEADIPVCQLSVQPHLDGTYHYNLGRALAPLKNDGVLIIGSGSATHPLDETPHYFDGVAPWAAAFDSWLRKALINGRFEEVNIYESKAPNWKLAHPFPEHFYPLHVVLGAAGEKWKAELIHSSWDHGTLCHGSYKFTSA.

Zn(2+) contacts are provided by histidine 22, histidine 60, histidine 182, and histidine 236.

It belongs to the DODA-type extradiol aromatic ring-opening dioxygenase family. Requires Zn(2+) as cofactor.

The catalysed reaction is L-dopa + O2 = 4-(L-alanin-3-yl)-2-hydroxy-cis,cis-muconate 6-semialdehyde + H(+). It functions in the pathway pigment biosynthesis; betalain biosynthesis. Functionally, opens the cyclic ring of dihydroxy-phenylalanine (DOPA) between carbons 4 and 5, thus producing an unstable seco-DOPA that rearranges nonenzymatically to betalamic acid. The polypeptide is 4,5-DOPA dioxygenase extradiol 1 (Beta vulgaris (Sugar beet)).